A 94-amino-acid chain; its full sequence is Small ubiquitin-related modifier 3-like (94 aa).

Lysine 11 participates in a covalent cross-link: Glycyl lysine isopeptide (Lys-Gly) (interchain with G-Cter in SUMO). The Ubiquitin-like domain occupies 15–92 (DHINLKVAGQ…IDVFQQQTGG (78 aa)). Residue glycine 92 forms a Glycyl lysine isopeptide (Gly-Lys) (interchain with K-? in acceptor proteins) linkage. Positions 93-94 (SC) are excised as a propeptide.

Belongs to the ubiquitin family. SUMO subfamily. Interacts with sae2 and ube2i. Covalently attached to a number of proteins. Polymeric chains can be formed through Lys-11 cross-linking. Post-translationally, cleavage of precursor form by a sentrin-specific protease is necessary for function.

Its subcellular location is the cytoplasm. It localises to the nucleus. The protein localises to the PML body. Its function is as follows. Ubiquitin-like protein which can be covalently attached to target lysines either as a monomer or as a lysine-linked polymer. Does not seem to be involved in protein degradation and may function as an antagonist of ubiquitin in the degradation process. Plays a role in a number of cellular processes such as nuclear transport, DNA replication and repair, mitosis and signal transduction. Covalent attachment to its substrates requires prior activation by the E1 complex sae1-sae2 and linkage to the E2 enzyme ube2i. The sequence is that of Small ubiquitin-related modifier 3-like (sumo3l) from Danio rerio (Zebrafish).